The primary structure comprises 717 residues: Probable metal-nicotianamine transporter YSL12 (717 aa).

The interval 1–56 (MASHANASGGGGDEEMVEASTLRHRHGAGKDANGVGTERQLAAAAAEGEEEGPSSV) is disordered. 14 helical membrane-spanning segments follow: residues 76 to 96 (AFVV…KLNL), 99 to 119 (GIIP…VRLW), 144 to 164 (CVVA…LFGM), 186 to 206 (IGWM…ALVP), 248 to 268 (LGKF…YTAG), 306 to 326 (IVNV…WPLI), 351 to 371 (VFIS…KVLI), 422 to 442 (VAFG…PQIF), 450 to 470 (ILVA…GAGL), 482 to 502 (LAIF…LVGL), 536 to 556 (FVSQ…VFWL), 593 to 613 (LPKH…AINL), 636 to 656 (FYIG…LFVW), and 671 to 691 (VASG…ILAL).

It belongs to the YSL (TC 2.A.67.2) family. Expressed in root cortex and stele.

It is found in the membrane. Functionally, may be involved in the transport of nicotianamine-chelated metals. The protein is Probable metal-nicotianamine transporter YSL12 (YSL12) of Oryza sativa subsp. japonica (Rice).